A 294-amino-acid chain; its full sequence is Glycine--tRNA ligase alpha subunit (294 aa).

The protein belongs to the class-II aminoacyl-tRNA synthetase family. Tetramer of two alpha and two beta subunits.

The protein localises to the cytoplasm. It catalyses the reaction tRNA(Gly) + glycine + ATP = glycyl-tRNA(Gly) + AMP + diphosphate. The polypeptide is Glycine--tRNA ligase alpha subunit (Trichodesmium erythraeum (strain IMS101)).